A 276-amino-acid polypeptide reads, in one-letter code: 4-deoxy-L-threo-5-hexosulose-uronate ketol-isomerase 1 (276 aa).

Positions 194, 196, 201, and 243 each coordinate Zn(2+).

The protein belongs to the KduI family. The cofactor is Zn(2+).

The enzyme catalyses 5-dehydro-4-deoxy-D-glucuronate = 3-deoxy-D-glycero-2,5-hexodiulosonate. It participates in glycan metabolism; pectin degradation; 2-dehydro-3-deoxy-D-gluconate from pectin: step 4/5. Catalyzes the isomerization of 5-dehydro-4-deoxy-D-glucuronate to 3-deoxy-D-glycero-2,5-hexodiulosonate. The chain is 4-deoxy-L-threo-5-hexosulose-uronate ketol-isomerase 1 (kduI1) from Enterococcus faecalis (strain ATCC 700802 / V583).